Consider the following 246-residue polypeptide: Submandibular gland secretory Glx-rich protein CA (246 aa).

An N-terminal signal peptide occupies residues 1–18; the sequence is MLVVLLTAALLALSSAQG. Residues 14–223 are disordered; that stretch reads SSAQGTDEEV…SGRPKKPLLP (210 aa). 7 stretches are compositionally biased toward low complexity: residues 39 to 50, 58 to 71, 81 to 93, 104 to 116, 127 to 141, 150 to 159, and 178 to 196; these read PVDSGSDPPSAD, EGESAAPANEEPPA, QQEPTQAENQEPP, QQEPTQAEDQQPPAT, QQESTQAENQ, and VESPPSSPENSQEQPQQTN. A run of 5 repeats spans residues 67-89, 90-112, 113-135, 136-158, and 159-181. Positions 67–181 are 5 X 23 AA tandem repeats; it reads EEPPATSGSE…QPEEGNVESP (115 aa). A compositionally biased stretch (basic and acidic residues) spans 197–216; that stretch reads PEEKPPAPKTQEEPQHDSGR.

In terms of tissue distribution, submandibular gland acinar cells.

Its subcellular location is the secreted. Functionally, GRP proteins have a marked affinity for hydroxyapatite. They may play a role in the formation of the protective acquired pellicle at the saliva-tooth interface. The protein is Submandibular gland secretory Glx-rich protein CA (Grpca) of Rattus norvegicus (Rat).